Here is a 54-residue protein sequence, read N- to C-terminus: uncharacterized protein (54 aa).

Positions 23–35 are enriched in basic and acidic residues; that stretch reads DVMQEGETAKELN. The disordered stretch occupies residues 23 to 54; that stretch reads DVMQEGETAKELNYEGEDMQATSSAQNRQTSV. Polar residues predominate over residues 42-54; the sequence is QATSSAQNRQTSV.

This is an uncharacterized protein from Bacillus subtilis (strain 168).